The chain runs to 148 residues: Hemoglobin subunit beta (148 aa).

Residues residue 3–histidine 148 form the Globin domain. Heme b contacts are provided by histidine 64 and histidine 93.

Belongs to the globin family. As to quaternary structure, heterotetramer of two alpha chains and two beta chains. In terms of tissue distribution, red blood cells.

Its function is as follows. Involved in oxygen transport from gills to the various peripheral tissues. This chain is Hemoglobin subunit beta (hbb), found in Decapterus maruadsi (Japanese scad).